A 232-amino-acid chain; its full sequence is Lipopolysaccharide core heptose(II) kinase WaaY (232 aa).

The protein belongs to the protein kinase superfamily. RfaY/WaaY family.

It catalyses the reaction alpha-D-Glc-(1-&gt;3)-[L-alpha-D-Hep-(1-&gt;7)]-L-alpha-D-Hep-(1-&gt;3)-4-O-PO3(2-)-L-alpha-D-Hep-(1-&gt;5)-[alpha-Kdo-(2-&gt;4)]-alpha-Kdo-(2-&gt;6)-lipid A + ATP = alpha-D-Glc-(1-&gt;3)-[L-alpha-D-Hep-(1-&gt;7)]-4-O-PO3(2-)-L-alpha-D-Hep-(1-&gt;3)-4-O-PO3(2-)-L-alpha-D-Hep-(1-&gt;5)-[alpha-Kdo-(2-&gt;4)]-alpha-Kdo-(2-&gt;6)-lipid A + ADP + H(+). It participates in bacterial outer membrane biogenesis; LPS core biosynthesis. In terms of biological role, kinase involved in the biosynthesis of the core oligosaccharide region of lipopolysaccharide (LPS). Catalyzes the phosphorylation of the second heptose unit (HepII) of the inner core. The sequence is that of Lipopolysaccharide core heptose(II) kinase WaaY from Salmonella typhimurium (strain LT2 / SGSC1412 / ATCC 700720).